A 347-amino-acid chain; its full sequence is Involucrin (347 aa).

Disordered stretches follow at residues 1–43 and 56–347; these read MSQQ…LPAP and PLED…RRSL. The segment covering 27–36 has biased composition (polar residues); sequence ADTQQEQVKQ. 2 stretches are compositionally biased toward low complexity: residues 70-114 and 138-161; these read VPEQ…QQES and DQQQ…QQES. 2 stretches are compositionally biased toward basic and acidic residues: residues 164–173 and 212–221; these read QELHVDHHQQ. 2 stretches are compositionally biased toward low complexity: residues 222–241 and 265–285; these read QQES…QQES and DQQQ…QQQE. Over residues 287–341 the composition is skewed to basic and acidic residues; the sequence is QEDHQKAEHLEQEEAQREQQLKGQLEQEKKGVYQHLDQELTKRDEHLEKKGEHCW.

Belongs to the involucrin family. As to quaternary structure, directly or indirectly cross-linked to cornifelin (CNFN). Post-translationally, substrate of transglutaminase. Specific glutamines or lysines are cross-linked to keratins, desmoplakin and to inter involucrin molecules. As to expression, keratinocytes of epidermis and other stratified squamous epithelia.

It localises to the cytoplasm. In terms of biological role, part of the insoluble cornified cell envelope (CE) of stratified squamous epithelia. This is Involucrin (IVL) from Sus scrofa (Pig).